The sequence spans 171 residues: UPF0725 protein At3g25080 (171 aa).

This sequence belongs to the UPF0725 (EMB2204) family.

This is UPF0725 protein At3g25080 from Arabidopsis thaliana (Mouse-ear cress).